The chain runs to 798 residues: MATDDKVAILTDDEEEQKRKYVLADPFNGISREPEPPSNETPSPSESAAIPEEETDWIEKHCVKINNDLLISKVFYFFFYSAYGSLYPLLPVYYKQLGMSPSQSGLLVGIRYFIEFCSAPFWGVVADRFKKGKVVLLFSLLCWVLFNLGIGFVKPATLRCVPKIPPTARPTNSSHPFTILPANSSIVPSITTSTRTREKRNLPPYDGLEMLVSEPNVTETVIFSTAPNKTSAPTLQPQTDEITDRVMDLTSHPSTAPSTPPGNTTRETTTSLVTTTKSLPSDQVTLVYDQQEVEAIFLVILVVVIIGEFFSASSVTIVDTVTLQYLGKHRDRYGLQRMWGSLGWGLAMLSVGIGIDYTHIDVLIDGKGCKPPEYRNYQIVFIVFGVLMTMALIVATQFRFRYNHFKNGENKGKEVEIPQVERNSSTECSEETPTTTSHSQAFNFWDLIRLLCSVQYGSVLFVAWFMGFGYGFVFTFLYWHLEDLNGTTTLFGVCSVLSHVSELTAYFFSHKLIELIGHIRVLYIGLACNTARYIYISYLENAWTVLPMEVLQGVTHAAIWAACISYLSAAVPPELRTSAQGILQGLHLGLGRGCGAMIGGVLVNYFGAAATFRGIGMACLVILLLFALIQWLAVPDEEEDKTMLAERIPVPSSPVPIATIDLVQQQTEDVMPRIEPRLPPKKTKHQEEQEDVNKPAWGVSSSPWVTFVYALYQIKEMMQLTRDNRASEIQPLQGTSENRESPPAGGGTLPGPCETHSDPSRNQPSPQAAAASQTQSSPARPRVEESEDQQAQPAAGGH.

Position 11 is a phosphothreonine (Thr-11). The segment at Asp-25–Ile-50 is disordered. Over residues Ser-38–Ile-50 the composition is skewed to low complexity. 12 consecutive transmembrane segments (helical) span residues Val-74 to Tyr-94, Leu-106 to Ala-126, Lys-133 to Val-153, Ala-295 to Val-315, Trp-344 to Ile-364, Gln-378 to Phe-398, Val-459 to Trp-479, Thr-488 to Phe-508, Ile-516 to Ile-536, Gly-553 to Pro-573, Leu-588 to Ala-608, and Gly-614 to Val-634. Disordered stretches follow at residues Met-671–Ala-696 and Leu-732–His-798. Low complexity predominate over residues Ser-760–Arg-780.

Belongs to the major facilitator superfamily. MFSD6 family.

Its subcellular location is the membrane. The sequence is that of Major facilitator superfamily domain-containing protein 6 (MFSD6) from Sus scrofa (Pig).